Here is a 249-residue protein sequence, read N- to C-terminus: Proteasome subunit alpha (249 aa).

Belongs to the peptidase T1A family. The 20S proteasome core is composed of 14 alpha and 14 beta subunits that assemble into four stacked heptameric rings, resulting in a barrel-shaped structure. The two inner rings, each composed of seven catalytic beta subunits, are sandwiched by two outer rings, each composed of seven alpha subunits. The catalytic chamber with the active sites is on the inside of the barrel. Has a gated structure, the ends of the cylinder being occluded by the N-termini of the alpha-subunits. Is capped at one or both ends by the proteasome regulatory ATPase, PAN.

It localises to the cytoplasm. With respect to regulation, the formation of the proteasomal ATPase PAN-20S proteasome complex, via the docking of the C-termini of PAN into the intersubunit pockets in the alpha-rings, triggers opening of the gate for substrate entry. Interconversion between the open-gate and close-gate conformations leads to a dynamic regulation of the 20S proteasome proteolysis activity. Component of the proteasome core, a large protease complex with broad specificity involved in protein degradation. This chain is Proteasome subunit alpha, found in Methanosarcina barkeri (strain Fusaro / DSM 804).